The following is an 82-amino-acid chain: Costars family protein v1g158749 (82 aa).

This sequence belongs to the costars family.

This chain is Costars family protein v1g158749, found in Nematostella vectensis (Starlet sea anemone).